The chain runs to 222 residues: Dual specificity phosphatase 29 (222 aa).

The 149-residue stretch at 54 to 202 folds into the Tyrosine-protein phosphatase domain; it reads HVNEVWPKLY…LRELDKQLVQ (149 aa). 146–153 is a binding site for substrate; the sequence is HCAMGRSR. Cysteine 147 acts as the Phosphocysteine intermediate in catalysis. The tract at residues 201-222 is disordered; the sequence is VQQRRGAQHRGEAGEKAGEKEP. A compositionally biased stretch (basic and acidic residues) spans 209-222; it reads HRGEAGEKAGEKEP.

It belongs to the protein-tyrosine phosphatase family. Non-receptor class dual specificity subfamily. As to quaternary structure, homodimer. Interacts with PRKAA2.

The protein localises to the cytoplasm. The protein resides in the nucleus. The catalysed reaction is O-phospho-L-tyrosyl-[protein] + H2O = L-tyrosyl-[protein] + phosphate. It catalyses the reaction O-phospho-L-seryl-[protein] + H2O = L-seryl-[protein] + phosphate. It carries out the reaction O-phospho-L-threonyl-[protein] + H2O = L-threonyl-[protein] + phosphate. Dual specificity phosphatase able to dephosphorylate phosphotyrosine, phosphoserine and phosphothreonine residues within the same substrate, with a preference for phosphotyrosine as a substrate. Involved in the modulation of intracellular signaling cascades. In skeletal muscle regulates systemic glucose homeostasis by activating, AMPK, an energy sensor protein kinase. Affects MAP kinase signaling though modulation of the MAPK1/2 cascade in skeletal muscle promoting muscle cell differentiation, development and atrophy. This is Dual specificity phosphatase 29 (DUSP29) from Sus scrofa (Pig).